The primary structure comprises 78 residues: Large ribosomal subunit protein bL28 (78 aa).

Positions 1–22 are disordered; it reads MSRVCQVTGKRPMSGNNRSHAM.

It belongs to the bacterial ribosomal protein bL28 family.

The sequence is that of Large ribosomal subunit protein bL28 from Yersinia pseudotuberculosis serotype O:1b (strain IP 31758).